A 44-amino-acid chain; its full sequence is Small, acid-soluble spore protein P (44 aa).

A disordered region spans residues 1 to 44; it reads MSHTMGKNNREAKEKKGQPEPLSGSHKVKNRNHSRQKHHAHHDM. The segment covering 8–18 has biased composition (basic and acidic residues); it reads NNREAKEKKGQ. Over residues 26-44 the composition is skewed to basic residues; that stretch reads HKVKNRNHSRQKHHAHHDM.

Belongs to the SspP family.

It is found in the spore core. This chain is Small, acid-soluble spore protein P, found in Bacillus cereus (strain ATCC 14579 / DSM 31 / CCUG 7414 / JCM 2152 / NBRC 15305 / NCIMB 9373 / NCTC 2599 / NRRL B-3711).